The chain runs to 98 residues: NADH-ubiquinone oxidoreductase chain 4L (98 aa).

The next 3 membrane-spanning stretches (helical) occupy residues 1–21 (MTSI…GVLI), 28–48 (STLL…ALLI), and 59–79 (APII…ALLV).

The protein belongs to the complex I subunit 4L family. In terms of assembly, core subunit of respiratory chain NADH dehydrogenase (Complex I) which is composed of 45 different subunits.

The protein resides in the mitochondrion inner membrane. The catalysed reaction is a ubiquinone + NADH + 5 H(+)(in) = a ubiquinol + NAD(+) + 4 H(+)(out). Functionally, core subunit of the mitochondrial membrane respiratory chain NADH dehydrogenase (Complex I) which catalyzes electron transfer from NADH through the respiratory chain, using ubiquinone as an electron acceptor. Part of the enzyme membrane arm which is embedded in the lipid bilayer and involved in proton translocation. The chain is NADH-ubiquinone oxidoreductase chain 4L (MT-ND4L) from Trichosurus vulpecula (Brush-tailed possum).